The primary structure comprises 259 residues: Binding partner of ACD11 1 (259 aa).

Residues 6–77 (RSVKVGNLSS…QSVIIELAPN (72 aa)) enclose the RRM domain. A disordered region spans residues 219 to 259 (GEVGQKTKEKVEAEQPSQPAQSQQQLPEGYSPIHSSEYSKN). Residues 232–243 (EQPSQPAQSQQQ) are compositionally biased toward low complexity.

In terms of assembly, interacts with ACD11, PR1F2 and PR1F3.

The protein localises to the cytoplasm. Its subcellular location is the membrane. The sequence is that of Binding partner of ACD11 1 (BPA1) from Arabidopsis thaliana (Mouse-ear cress).